Reading from the N-terminus, the 154-residue chain is Myoglobin (154 aa).

The 147-residue stretch at 2-148 folds into the Globin domain; the sequence is GLSDQEWQHV…FRNDMASKYK (147 aa). His-65 lines the nitrite pocket. Residue His-65 participates in O2 binding. A heme b-binding site is contributed by His-94.

The protein belongs to the globin family. As to quaternary structure, monomeric.

The protein localises to the cytoplasm. It is found in the sarcoplasm. It carries out the reaction Fe(III)-heme b-[protein] + nitric oxide + H2O = Fe(II)-heme b-[protein] + nitrite + 2 H(+). The catalysed reaction is H2O2 + AH2 = A + 2 H2O. Its function is as follows. Monomeric heme protein which primary function is to store oxygen and facilitate its diffusion within muscle tissues. Reversibly binds oxygen through a pentacoordinated heme iron and enables its timely and efficient release as needed during periods of heightened demand. Depending on the oxidative conditions of tissues and cells, and in addition to its ability to bind oxygen, it also has a nitrite reductase activity whereby it regulates the production of bioactive nitric oxide. Under stress conditions, like hypoxia and anoxia, it also protects cells against reactive oxygen species thanks to its pseudoperoxidase activity. The chain is Myoglobin (MB) from Uria lomvia (Thick-billed murre).